A 160-amino-acid chain; its full sequence is Cytochrome c-type biogenesis protein CcmE (160 aa).

The Cytoplasmic portion of the chain corresponds to 1–8 (MNPRRKQR). The chain crosses the membrane as a helical; Signal-anchor for type II membrane protein span at residues 9–29 (LTWVAILVIGVSVATGLMLYA). Residues 30–160 (LSQSIDLFYT…PNTVEKGEGQ (131 aa)) are Periplasmic-facing. Residues His130 and Tyr134 each coordinate heme.

It belongs to the CcmE/CycJ family.

The protein resides in the cell inner membrane. Its function is as follows. Heme chaperone required for the biogenesis of c-type cytochromes. Transiently binds heme delivered by CcmC and transfers the heme to apo-cytochromes in a process facilitated by CcmF and CcmH. In Idiomarina loihiensis (strain ATCC BAA-735 / DSM 15497 / L2-TR), this protein is Cytochrome c-type biogenesis protein CcmE.